The chain runs to 543 residues: Cytochrome P450 307a1 (543 aa).

A Phosphoserine modification is found at serine 219. The disordered stretch occupies residues 440–460; the sequence is FLEPSKEQSPKNSKGSDSGIE. Residues 449-460 are compositionally biased toward polar residues; that stretch reads PKNSKGSDSGIE. Cysteine 485 provides a ligand contact to heme.

It belongs to the cytochrome P450 family. It depends on heme as a cofactor.

Its subcellular location is the endoplasmic reticulum membrane. It is found in the microsome membrane. Functionally, required for correct development of the embryonic midline glial cells which are necessary for the formation of distinct segmental commissures. This chain is Cytochrome P450 307a1 (spo), found in Drosophila melanogaster (Fruit fly).